The following is a 371-amino-acid chain: Flagellar P-ring protein (371 aa).

The N-terminal stretch at 1–24 (MSIRVLLFSIFTGFLLAAAGPALA) is a signal peptide. The segment covering 301–321 (PQPFSSGTTATQPQTDISAQK) has biased composition (polar residues). The disordered stretch occupies residues 301–322 (PQPFSSGTTATQPQTDISAQKT).

This sequence belongs to the FlgI family. As to quaternary structure, the basal body constitutes a major portion of the flagellar organelle and consists of four rings (L,P,S, and M) mounted on a central rod.

The protein resides in the periplasm. Its subcellular location is the bacterial flagellum basal body. In terms of biological role, assembles around the rod to form the L-ring and probably protects the motor/basal body from shearing forces during rotation. In Allorhizobium ampelinum (strain ATCC BAA-846 / DSM 112012 / S4) (Agrobacterium vitis (strain S4)), this protein is Flagellar P-ring protein.